Here is a 185-residue protein sequence, read N- to C-terminus: UPF0301 protein MS0260 (185 aa).

Belongs to the UPF0301 (AlgH) family.

The polypeptide is UPF0301 protein MS0260 (Mannheimia succiniciproducens (strain KCTC 0769BP / MBEL55E)).